The following is a 273-amino-acid chain: MNNRVHQGHLARKRFGQNFLNDQFVIDSIVSAINPQKGQAMVEIGPGLAALTEPVGERLDKLTVIELDRDLAARLQTHPFLGPKLTIYQQDAMTFNFGELAEKMGQPLRVFGNLPYNISTPLMFHLFSYTDAIADMHFMLQKEVVNRLVAGPNSKAYGRLSVMAQYYCNVIPVLEVPPSAFTPPPKVDSAVVRLVPHATMPHPVKDVRVLSRITTEAFNQRRKTIRNSLGNLFSVEVLTGMGIDPAMRAENISVAQYCQMANYLAENAPLQES.

Residues asparagine 18, leucine 20, glycine 45, glutamate 66, aspartate 91, and asparagine 113 each contribute to the S-adenosyl-L-methionine site.

It belongs to the class I-like SAM-binding methyltransferase superfamily. rRNA adenine N(6)-methyltransferase family. RsmA subfamily.

The protein localises to the cytoplasm. The catalysed reaction is adenosine(1518)/adenosine(1519) in 16S rRNA + 4 S-adenosyl-L-methionine = N(6)-dimethyladenosine(1518)/N(6)-dimethyladenosine(1519) in 16S rRNA + 4 S-adenosyl-L-homocysteine + 4 H(+). Functionally, specifically dimethylates two adjacent adenosines (A1518 and A1519) in the loop of a conserved hairpin near the 3'-end of 16S rRNA in the 30S particle. May play a critical role in biogenesis of 30S subunits. The chain is Ribosomal RNA small subunit methyltransferase A from Escherichia coli O139:H28 (strain E24377A / ETEC).